Reading from the N-terminus, the 252-residue chain is Uridylate kinase (252 aa).

Residue 27–30 coordinates ATP; it reads KLGG. Residue glycine 68 coordinates UMP. The ATP site is built by glycine 69 and arginine 73. UMP contacts are provided by residues aspartate 88 and 149-156; that span reads MGLPYFST. 2 residues coordinate ATP: tyrosine 182 and aspartate 185.

Belongs to the UMP kinase family. In terms of assembly, homohexamer.

The protein resides in the cytoplasm. The catalysed reaction is UMP + ATP = UDP + ADP. It participates in pyrimidine metabolism; CTP biosynthesis via de novo pathway; UDP from UMP (UMPK route): step 1/1. Inhibited by UTP. In terms of biological role, catalyzes the reversible phosphorylation of UMP to UDP. The protein is Uridylate kinase of Mycobacterium sp. (strain JLS).